We begin with the raw amino-acid sequence, 295 residues long: Proline-rich protein 32 (295 aa).

2 disordered regions span residues 10–48 (GHAP…GHPG) and 101–120 (ATGE…SGQD).

The sequence is that of Proline-rich protein 32 (PRR32) from Bos taurus (Bovine).